We begin with the raw amino-acid sequence, 341 residues long: MKLEDFDFELPEDRIAQHPVEPRDSSRLMVMNRWTGEIEHRVFRELPELLQAGDVLVVNNTRVIPARLIGEKEGTQAKIECLLLTRRDKDVWETLIKPGKRLKAGQTVVFGDGLLRGELLEILPDGNRLVRFNYQGIFEEVLDQLGNMPLPPYITEQLQDKERYQTIYAKESGSAAAPTAGLHFTPELLERLQDKGVEIVEILLHVGLGTFRPVKVENVEEHTMHSEYYRVTPDAAERINRAKSQGRRVIAVGTTASRTLESVAGENGRIEGKEGWTDIYIYPGYTFKILDGLITNFHFPKSTLVMLVSALAGRDQILKAYQIAIAEGYRFYSFGDAMMIL.

Belongs to the QueA family. As to quaternary structure, monomer.

The protein localises to the cytoplasm. The catalysed reaction is 7-aminomethyl-7-carbaguanosine(34) in tRNA + S-adenosyl-L-methionine = epoxyqueuosine(34) in tRNA + adenine + L-methionine + 2 H(+). The protein operates within tRNA modification; tRNA-queuosine biosynthesis. Transfers and isomerizes the ribose moiety from AdoMet to the 7-aminomethyl group of 7-deazaguanine (preQ1-tRNA) to give epoxyqueuosine (oQ-tRNA). The polypeptide is S-adenosylmethionine:tRNA ribosyltransferase-isomerase (Desulfitobacterium hafniense (strain DSM 10664 / DCB-2)).